A 203-amino-acid chain; its full sequence is Type III effector protein HopBF1 (203 aa).

Positions 1–23 are disordered; the sequence is MFNVSNNVAPSRYQGPSSTSVTP. Residues S40, Q41, K42, D107, I109, and D114 each coordinate ATP. D155 is a catalytic residue. An ATP-binding site is contributed by Q157.

This sequence belongs to the HopBF1 family.

The protein localises to the secreted. The protein resides in the host cell. It carries out the reaction L-seryl-[protein] + ATP = O-phospho-L-seryl-[protein] + ADP + H(+). Functionally, effector protein that targets and inactivates the eukaryotic molecular chaperone HSP90 during infection. HopBF1 is recognized by HSP90 as a host client. As a result, HopBF1 phosphorylates HSP90, leading to the inactivation of the HSP90 ATPase activity and chaperone function. In vitro, can phosphorylate the recombinant yeast HSP82 (HSP90) and human HSP 90-beta on Ser-108. In Ewingella americana (strain ATCC 33852 / DSM 4580 / CCUG 14506 / JCM 5911 / LMG 7869 / NCTC 12157 / CDC 1468-78), this protein is Type III effector protein HopBF1.